Reading from the N-terminus, the 1170-residue chain is WD repeat-containing protein 35 (1170 aa).

WD repeat units lie at residues 12–51, 69–108, 113–152, 154–193, and 491–528; these read PNNV…DDSK, GHSG…WYEE, RNKS…IWGK, LKGI…IMKM, and GTRD…LIQK.

In terms of assembly, component of the IFT complex A (IFT-A) complex. IFT-A complex is divided into a core subcomplex composed of IFT122:IFT140:WDR19 which is associated with TULP3 and a peripheral subcomplex composed of IFT43:WDR35:TTC21B. Interacts directy with IFT122, ITF43 and TTC21B. Interacts with IFT43. Interacts with CFAP61. As to expression, expressed at high levels in testis and at lower levels in the brain (at protein level). Also present in other tissues, including heart, uterus, spinal cord, ovary, liver, kidney, lung, pancreas and stomach.

The protein resides in the cytoplasm. It localises to the cytoskeleton. It is found in the microtubule organizing center. The protein localises to the centrosome. Its subcellular location is the cilium axoneme. The protein resides in the cilium basal body. Its function is as follows. As a component of the IFT complex A (IFT-A), a complex required for retrograde ciliary transport and entry into cilia of G protein-coupled receptors (GPCRs), it is involved in ciliogenesis and ciliary protein trafficking. May promote CASP3 activation and TNF-stimulated apoptosis. This is WD repeat-containing protein 35 (Wdr35) from Rattus norvegicus (Rat).